We begin with the raw amino-acid sequence, 702 residues long: Elongation factor G (702 aa).

In terms of domain architecture, tr-type G spans 8-290; that stretch reads ERYRNIGISA…AVIEYLPAPT (283 aa). GTP is bound by residues 17–24, 88–92, and 142–145; these read AHIDAGKT, DTPGH, and NKMD.

It belongs to the TRAFAC class translation factor GTPase superfamily. Classic translation factor GTPase family. EF-G/EF-2 subfamily.

The protein resides in the cytoplasm. In terms of biological role, catalyzes the GTP-dependent ribosomal translocation step during translation elongation. During this step, the ribosome changes from the pre-translocational (PRE) to the post-translocational (POST) state as the newly formed A-site-bound peptidyl-tRNA and P-site-bound deacylated tRNA move to the P and E sites, respectively. Catalyzes the coordinated movement of the two tRNA molecules, the mRNA and conformational changes in the ribosome. This is Elongation factor G from Yersinia pseudotuberculosis serotype O:1b (strain IP 31758).